We begin with the raw amino-acid sequence, 392 residues long: Protein FAM53C (392 aa).

N-acetylmethionine is present on Met1. The disordered stretch occupies residues 76–120 (LHLRPPSPGSSPQEQSLSQVLSPEPPDPEKLPVPPAPPSKRHCRS). Residues 85 to 97 (SSPQEQSLSQVLS) show a composition bias toward low complexity. Phosphoserine occurs at positions 122 and 162. Disordered stretches follow at residues 141–167 (LWTP…PKRV) and 201–294 (DSSH…EDPR). Polar residues predominate over residues 201–215 (DSSHPSAASPQSGSW). Phosphoserine is present on residues Ser232, Ser234, Ser255, and Ser273. Positions 241 to 256 (ASRFLPSARSSPASSP) are enriched in low complexity. Residues 278–294 (LDARKAGVKRRHEEDPR) are compositionally biased toward basic and acidic residues. Ser299 carries the phosphoserine modification.

The protein belongs to the FAM53 family.

This Bos taurus (Bovine) protein is Protein FAM53C.